The following is a 595-amino-acid chain: MKQSHIRNFAIIAHIDHGKSTLADQIMSLTQTVSAREQHAQLLDDMTVEQAHGVTVKARTVRNYYQADDGQEYEYNLIDTPGHVDFNYEVAKSLAATEGAILLVDATQGVQAQTIANYRIAKQRQLTLIPVLNKVDLPSADIDAALAQLNDLDSAFTPEQVLQISAKTGQGVPAVLEAIKQRLPAPQGDLHQPLKALVFDSLYDPYQGVIAYVRLIDGQLKSQQALCLMQGQQDFNGKAIGVFAPQMHPQESLSAGDVGYVVTGIKDPRKVRVGDTLTSVATPTQRPLAGYQPAKSMVFAGLYPKNNDYPALKEAVQKLNLNDPSFTYVEERSEALGVGFRCGFLGTFHLQIIRERLHDEYGVDVLTTAPNVTYHVTLTNGQQVIVNNPVQFPAFSLIKEVTEPFMKAEITMPADNLNAVLKLAEQHKGTLIDLANSGDLIVASLKIPLSEIAYHFFSELKSVSHGFASLSTAFMANEVSDLVKVEVDINYAPVDALTFIVHREDAPNMTQQLVANLKTTVPRQLYPTPVQARVEGKVIARVDVPPLRKNAAVNGEQHSTSKKAALLRRQSANKRRASKNTIKLPQSVFNAILSL.

In terms of domain architecture, tr-type G spans 4 to 187; sequence SHIRNFAIIA…AIKQRLPAPQ (184 aa). Residues 16 to 21 and 133 to 136 each bind GTP; these read DHGKST and NKVD.

The protein belongs to the TRAFAC class translation factor GTPase superfamily. Classic translation factor GTPase family. LepA subfamily.

It localises to the cell membrane. It carries out the reaction GTP + H2O = GDP + phosphate + H(+). Required for accurate and efficient protein synthesis under certain stress conditions. May act as a fidelity factor of the translation reaction, by catalyzing a one-codon backward translocation of tRNAs on improperly translocated ribosomes. Back-translocation proceeds from a post-translocation (POST) complex to a pre-translocation (PRE) complex, thus giving elongation factor G a second chance to translocate the tRNAs correctly. Binds to ribosomes in a GTP-dependent manner. The protein is Elongation factor 4 2 of Lactiplantibacillus plantarum (strain ATCC BAA-793 / NCIMB 8826 / WCFS1) (Lactobacillus plantarum).